Consider the following 202-residue polypeptide: Peptide deformylase (202 aa).

The segment at M1–E24 is disordered. 2 residues coordinate Fe cation: C121 and H163. E164 is an active-site residue. Position 167 (H167) interacts with Fe cation.

Belongs to the polypeptide deformylase family. The cofactor is Fe(2+).

It carries out the reaction N-terminal N-formyl-L-methionyl-[peptide] + H2O = N-terminal L-methionyl-[peptide] + formate. Removes the formyl group from the N-terminal Met of newly synthesized proteins. Requires at least a dipeptide for an efficient rate of reaction. N-terminal L-methionine is a prerequisite for activity but the enzyme has broad specificity at other positions. This chain is Peptide deformylase, found in Prochlorococcus marinus (strain NATL1A).